The chain runs to 442 residues: Histidinol dehydrogenase (442 aa).

The disordered stretch occupies residues 1 to 20; the sequence is MLNVTDLRGQTPSKSDIRRA. Positions 129, 193, and 218 each coordinate NAD(+). Residues threonine 241, glutamine 263, and histidine 266 each coordinate substrate. Glutamine 263 and histidine 266 together coordinate Zn(2+). Active-site proton acceptor residues include glutamate 332 and histidine 333. Residues histidine 333, aspartate 366, glutamate 420, and histidine 425 each contribute to the substrate site. A Zn(2+)-binding site is contributed by aspartate 366. Histidine 425 provides a ligand contact to Zn(2+).

It belongs to the histidinol dehydrogenase family. The cofactor is Zn(2+).

The enzyme catalyses L-histidinol + 2 NAD(+) + H2O = L-histidine + 2 NADH + 3 H(+). The protein operates within amino-acid biosynthesis; L-histidine biosynthesis; L-histidine from 5-phospho-alpha-D-ribose 1-diphosphate: step 9/9. Catalyzes the sequential NAD-dependent oxidations of L-histidinol to L-histidinaldehyde and then to L-histidine. The sequence is that of Histidinol dehydrogenase from Corynebacterium glutamicum (strain ATCC 13032 / DSM 20300 / JCM 1318 / BCRC 11384 / CCUG 27702 / LMG 3730 / NBRC 12168 / NCIMB 10025 / NRRL B-2784 / 534).